Here is a 310-residue protein sequence, read N- to C-terminus: Thiamine-monophosphate kinase (310 aa).

The Mg(2+) site is built by Asp-24, Thr-38, and Asp-39. Asp-46 is a substrate binding site. 2 residues coordinate Mg(2+): Asp-67 and Asp-115. Residues 114 to 115 (GD) and Arg-138 each bind ATP. Asp-203 lines the Mg(2+) pocket. Ser-205 lines the ATP pocket. Residue Asp-206 participates in Mg(2+) binding. 2 residues coordinate substrate: Glu-251 and Trp-306.

It belongs to the thiamine-monophosphate kinase family.

The enzyme catalyses thiamine phosphate + ATP = thiamine diphosphate + ADP. It participates in cofactor biosynthesis; thiamine diphosphate biosynthesis; thiamine diphosphate from thiamine phosphate: step 1/1. Its function is as follows. Catalyzes the ATP-dependent phosphorylation of thiamine-monophosphate (TMP) to form thiamine-pyrophosphate (TPP), the active form of vitamin B1. The chain is Thiamine-monophosphate kinase from Nitrosopumilus maritimus (strain SCM1).